The primary structure comprises 518 residues: Probable lysine--tRNA ligase, cytoplasmic (518 aa).

It belongs to the class-II aminoacyl-tRNA synthetase family. As to quaternary structure, homodimer.

It localises to the cytoplasm. It carries out the reaction tRNA(Lys) + L-lysine + ATP = L-lysyl-tRNA(Lys) + AMP + diphosphate. The sequence is that of Probable lysine--tRNA ligase, cytoplasmic from Enterocytozoon bieneusi (strain H348) (Microsporidian parasite).